The following is a 284-amino-acid chain: 2-dehydro-3-deoxyphosphooctonate aldolase (284 aa).

It belongs to the KdsA family.

Its subcellular location is the cytoplasm. It catalyses the reaction D-arabinose 5-phosphate + phosphoenolpyruvate + H2O = 3-deoxy-alpha-D-manno-2-octulosonate-8-phosphate + phosphate. Its pathway is carbohydrate biosynthesis; 3-deoxy-D-manno-octulosonate biosynthesis; 3-deoxy-D-manno-octulosonate from D-ribulose 5-phosphate: step 2/3. It participates in bacterial outer membrane biogenesis; lipopolysaccharide biosynthesis. This is 2-dehydro-3-deoxyphosphooctonate aldolase from Ralstonia pickettii (strain 12J).